Reading from the N-terminus, the 503-residue chain is Cytochrome P450 3A14 (503 aa).

Cys442 is a binding site for heme.

It belongs to the cytochrome P450 family. Heme serves as cofactor.

The protein localises to the endoplasmic reticulum membrane. The protein resides in the microsome membrane. The catalysed reaction is an organic molecule + reduced [NADPH--hemoprotein reductase] + O2 = an alcohol + oxidized [NADPH--hemoprotein reductase] + H2O + H(+). Functionally, cytochromes P450 are a group of heme-thiolate monooxygenases. In liver microsomes, this enzyme is involved in an NADPH-dependent electron transport pathway. It oxidizes a variety of structurally unrelated compounds, including steroids, fatty acids, and xenobiotics. In Cavia porcellus (Guinea pig), this protein is Cytochrome P450 3A14 (CYP3A14).